Consider the following 359-residue polypeptide: Biotin synthase (359 aa).

The tract at residues 1-22 is disordered; sequence MQSTPLNFVPNAAKAPVTPGQA. Residues 58-285 form the Radical SAM core domain; it reads NAVQLSTLLS…KAMVRLSAGR (228 aa). Residues cysteine 73, cysteine 77, and cysteine 80 each coordinate [4Fe-4S] cluster. Residues cysteine 117, cysteine 148, cysteine 208, and arginine 280 each contribute to the [2Fe-2S] cluster site.

Belongs to the radical SAM superfamily. Biotin synthase family. Homodimer. [4Fe-4S] cluster serves as cofactor. It depends on [2Fe-2S] cluster as a cofactor.

The catalysed reaction is (4R,5S)-dethiobiotin + (sulfur carrier)-SH + 2 reduced [2Fe-2S]-[ferredoxin] + 2 S-adenosyl-L-methionine = (sulfur carrier)-H + biotin + 2 5'-deoxyadenosine + 2 L-methionine + 2 oxidized [2Fe-2S]-[ferredoxin]. Its pathway is cofactor biosynthesis; biotin biosynthesis; biotin from 7,8-diaminononanoate: step 2/2. In terms of biological role, catalyzes the conversion of dethiobiotin (DTB) to biotin by the insertion of a sulfur atom into dethiobiotin via a radical-based mechanism. The protein is Biotin synthase of Ralstonia pickettii (strain 12J).